We begin with the raw amino-acid sequence, 119 residues long: Large ribosomal subunit protein bL20c (119 aa).

Belongs to the bacterial ribosomal protein bL20 family.

The protein resides in the plastid. It is found in the chloroplast. Binds directly to 23S ribosomal RNA and is necessary for the in vitro assembly process of the 50S ribosomal subunit. It is not involved in the protein synthesizing functions of that subunit. This chain is Large ribosomal subunit protein bL20c, found in Saccharum officinarum (Sugarcane).